Reading from the N-terminus, the 717-residue chain is uncharacterized protein (717 aa).

Belongs to the asfivirus C717R family.

The protein localises to the virion. This is an uncharacterized protein from African swine fever virus (strain Badajoz 1971 Vero-adapted) (Ba71V).